The chain runs to 1419 residues: Myosin-2B (1419 aa).

In terms of domain architecture, Myosin N-terminal SH3-like spans 4 to 57 (EVGTRCWYPNSEAGWIGCEVTKNDFQDGTYHIELTSETGLVIPIETKHLESNNA). The 706-residue stretch at 75-780 (EATHDLTTLS…VLAYLEKIRS (706 aa)) folds into the Myosin motor domain. An ATP-binding site is contributed by 169-176 (GESGAGKT). The actin-binding stretch occupies residues 451 to 531 (FIGVLDIYGF…LGILSLLDEE (81 aa)). 6 IQ domains span residues 783 to 805 (VTEL…LYLQ), 806 to 830 (AMLS…DFEM), 831 to 854 (KTDA…VFET), 855 to 878 (LKNI…QREF), 879 to 901 (ESRS…RYQT), and 902 to 931 (LKTG…QAES). Positions 909 to 940 (IQALVRRKQSQEKLKQLKIQAESAASLKNSAA) form a coiled coil. The segment at 1061-1419 (KDNERTSTSS…VIKELGSLLA (359 aa)) is non alpha-helical, tail domain. The Dilute domain occupies 1143–1357 (HSILKQTVQD…LNHLSNTARR (215 aa)).

This sequence belongs to the TRAFAC class myosin-kinesin ATPase superfamily. Myosin family. Homodimer. Interacts with calmodulin (CMD1) and the myosin light chain MLC1 through its IQ repeats.

In terms of biological role, myosin heavy chain that is required for the cell cycle-regulated transport of various organelles and proteins for their segregation. Functions by binding with its tail domain to receptor proteins on organelles and exerting force with its N-terminal motor domain against actin filaments, thereby transporting its cargo along polarized actin cables. This Naumovozyma castellii (Yeast) protein is Myosin-2B (MYO2B).